A 427-amino-acid chain; its full sequence is Serine--tRNA ligase (427 aa).

Residue 232–234 coordinates L-serine; the sequence is TAE. 263–265 is a binding site for ATP; sequence RSE. E286 is an L-serine binding site. 350-353 contributes to the ATP binding site; that stretch reads EISS. An L-serine-binding site is contributed by S385.

It belongs to the class-II aminoacyl-tRNA synthetase family. Type-1 seryl-tRNA synthetase subfamily. As to quaternary structure, homodimer. The tRNA molecule binds across the dimer.

It is found in the cytoplasm. The enzyme catalyses tRNA(Ser) + L-serine + ATP = L-seryl-tRNA(Ser) + AMP + diphosphate + H(+). It carries out the reaction tRNA(Sec) + L-serine + ATP = L-seryl-tRNA(Sec) + AMP + diphosphate + H(+). Its pathway is aminoacyl-tRNA biosynthesis; selenocysteinyl-tRNA(Sec) biosynthesis; L-seryl-tRNA(Sec) from L-serine and tRNA(Sec): step 1/1. Catalyzes the attachment of serine to tRNA(Ser). Is also able to aminoacylate tRNA(Sec) with serine, to form the misacylated tRNA L-seryl-tRNA(Sec), which will be further converted into selenocysteinyl-tRNA(Sec). In Lacticaseibacillus casei (strain BL23) (Lactobacillus casei), this protein is Serine--tRNA ligase.